The sequence spans 223 residues: Ribose-5-phosphate isomerase A (223 aa).

Residues 28-31 (TGTT), 81-84 (DSAD), and 94-97 (KGGG) each bind substrate. Glutamate 103 (proton acceptor) is an active-site residue. A substrate-binding site is contributed by lysine 121.

The protein belongs to the ribose 5-phosphate isomerase family. As to quaternary structure, homodimer.

The catalysed reaction is aldehydo-D-ribose 5-phosphate = D-ribulose 5-phosphate. The protein operates within carbohydrate degradation; pentose phosphate pathway; D-ribose 5-phosphate from D-ribulose 5-phosphate (non-oxidative stage): step 1/1. Its function is as follows. Catalyzes the reversible conversion of ribose-5-phosphate to ribulose 5-phosphate. This is Ribose-5-phosphate isomerase A from Buchnera aphidicola subsp. Acyrthosiphon pisum (strain 5A).